The primary structure comprises 123 residues: Large ribosomal subunit protein uL29 (123 aa).

The protein belongs to the universal ribosomal protein uL29 family.

This is Large ribosomal subunit protein uL29 (RPL35) from Babesia bovis.